We begin with the raw amino-acid sequence, 254 residues long: Ribosomal RNA large subunit methyltransferase E (254 aa).

The interval M1–Q28 is disordered. Residues L13 to G22 show a composition bias toward basic residues. S-adenosyl-L-methionine-binding residues include G80, W82, D103, D119, and D143. K183 functions as the Proton acceptor in the catalytic mechanism. The tract at residues D231–Q254 is disordered.

It belongs to the class I-like SAM-binding methyltransferase superfamily. RNA methyltransferase RlmE family.

It localises to the cytoplasm. The enzyme catalyses uridine(2552) in 23S rRNA + S-adenosyl-L-methionine = 2'-O-methyluridine(2552) in 23S rRNA + S-adenosyl-L-homocysteine + H(+). Functionally, specifically methylates the uridine in position 2552 of 23S rRNA at the 2'-O position of the ribose in the fully assembled 50S ribosomal subunit. The polypeptide is Ribosomal RNA large subunit methyltransferase E (Xanthobacter autotrophicus (strain ATCC BAA-1158 / Py2)).